Consider the following 450-residue polypeptide: Signal recognition particle 54 kDa protein (450 aa).

GTP is bound by residues 107–114 (GIQGSGKT), 188–192 (DTAGR), and 247–250 (TKLD).

The protein belongs to the GTP-binding SRP family. SRP54 subfamily. Part of the signal recognition particle protein translocation system, which is composed of SRP and FtsY. Archaeal SRP consists of a 7S RNA molecule of 300 nucleotides and two protein subunits: SRP54 and SRP19.

It is found in the cytoplasm. It catalyses the reaction GTP + H2O = GDP + phosphate + H(+). Involved in targeting and insertion of nascent membrane proteins into the cytoplasmic membrane. Binds to the hydrophobic signal sequence of the ribosome-nascent chain (RNC) as it emerges from the ribosomes. The SRP-RNC complex is then targeted to the cytoplasmic membrane where it interacts with the SRP receptor FtsY. The polypeptide is Signal recognition particle 54 kDa protein (Methanococcus maripaludis (strain C6 / ATCC BAA-1332)).